A 104-amino-acid polypeptide reads, in one-letter code: uncharacterized protein (104 aa).

This is an uncharacterized protein from Acidianus two-tailed virus (ATV).